The sequence spans 431 residues: 3-phosphoshikimate 1-carboxyvinyltransferase (431 aa).

Residues Lys-22, Ser-23, and Arg-27 each contribute to the 3-phosphoshikimate site. Phosphoenolpyruvate is bound at residue Lys-22. Residues Gly-94 and Arg-122 each coordinate phosphoenolpyruvate. 3-phosphoshikimate contacts are provided by Ser-168, Ser-169, Gln-170, Ser-196, Asp-315, and Lys-342. Phosphoenolpyruvate is bound at residue Gln-170. Residue Asp-315 is the Proton acceptor of the active site. Phosphoenolpyruvate is bound by residues Arg-346, Arg-390, and Lys-414.

Belongs to the EPSP synthase family. In terms of assembly, monomer.

It localises to the cytoplasm. It carries out the reaction 3-phosphoshikimate + phosphoenolpyruvate = 5-O-(1-carboxyvinyl)-3-phosphoshikimate + phosphate. It functions in the pathway metabolic intermediate biosynthesis; chorismate biosynthesis; chorismate from D-erythrose 4-phosphate and phosphoenolpyruvate: step 6/7. In terms of biological role, catalyzes the transfer of the enolpyruvyl moiety of phosphoenolpyruvate (PEP) to the 5-hydroxyl of shikimate-3-phosphate (S3P) to produce enolpyruvyl shikimate-3-phosphate and inorganic phosphate. The protein is 3-phosphoshikimate 1-carboxyvinyltransferase of Nitrosomonas europaea (strain ATCC 19718 / CIP 103999 / KCTC 2705 / NBRC 14298).